We begin with the raw amino-acid sequence, 58 residues long: ATP synthase F(0) complex subunit k, mitochondrial (58 aa).

Lys-16 and Lys-17 each carry N6-acetyllysine; partial. Residues 23-45 (TLTGRMNCVLATYGSIALIVLYF) form a helical membrane-spanning segment.

Component of the ATP synthase complex composed at least of ATP5F1A/subunit alpha, ATP5F1B/subunit beta, ATP5MC1/subunit c (homooctomer), MT-ATP6/subunit a, MT-ATP8/subunit 8, ATP5ME/subunit e, ATP5MF/subunit f, ATP5MG/subunit g, ATP5MK/subunit k, ATP5MJ/subunit j, ATP5F1C/subunit gamma, ATP5F1D/subunit delta, ATP5F1E/subunit epsilon, ATP5PF/subunit F6, ATP5PB/subunit b, ATP5PD/subunit d, ATP5PO/subunit OSCP. ATP synthase complex consists of a soluble F(1) head domain (subunits alpha(3) and beta(3)) - the catalytic core - and a membrane F(0) domain - the membrane proton channel (subunits c, a, 8, e, f, g, k and j). These two domains are linked by a central stalk (subunits gamma, delta, and epsilon) rotating inside the F1 region and a stationary peripheral stalk (subunits F6, b, d, and OSCP). The ATP synthase complex/complex V exists as a monomeric and a dimeric supercomplex that helps shape mitochondrial cristae to optimize proton flow.

Its subcellular location is the mitochondrion membrane. Subunit k, of the mitochondrial membrane ATP synthase complex (F(1)F(0) ATP synthase or Complex V) that produces ATP from ADP in the presence of a proton gradient across the membrane which is generated by electron transport complexes of the respiratory chain. ATP synthase complex consist of a soluble F(1) head domain - the catalytic core - and a membrane F(1) domain - the membrane proton channel. These two domains are linked by a central stalk rotating inside the F(1) region and a stationary peripheral stalk. During catalysis, ATP synthesis in the catalytic domain of F(1) is coupled via a rotary mechanism of the central stalk subunits to proton translocation. In vivo, can only synthesize ATP although its ATP hydrolase activity can be activated artificially in vitro. Part of the complex F(0) domain. Required for dimerization of the ATP synthase complex and as such regulates ATP synthesis in the mitochondria. The chain is ATP synthase F(0) complex subunit k, mitochondrial from Bos taurus (Bovine).